Reading from the N-terminus, the 130-residue chain is MAQETFNATGKRKESVARVRIVPGSGKVTINQKPMDVYFGRPVLRMVVNQPFSVTEMENKFDVLVNVHGGGVSGQAGAIKHGISKALVDYDEALRPALKKAGFLTRDARTVERKKYGRHKARKSTQFSKR.

This sequence belongs to the universal ribosomal protein uS9 family.

This chain is Small ribosomal subunit protein uS9, found in Magnetococcus marinus (strain ATCC BAA-1437 / JCM 17883 / MC-1).